We begin with the raw amino-acid sequence, 397 residues long: Ribosomal RNA large subunit methyltransferase I (397 aa).

Residues 2–80 (SAAIYLVKGR…QDINRAFFVK (79 aa)) form the PUA domain.

Belongs to the methyltransferase superfamily. RlmI family.

The protein resides in the cytoplasm. The catalysed reaction is cytidine(1962) in 23S rRNA + S-adenosyl-L-methionine = 5-methylcytidine(1962) in 23S rRNA + S-adenosyl-L-homocysteine + H(+). Specifically methylates the cytosine at position 1962 (m5C1962) of 23S rRNA. The polypeptide is Ribosomal RNA large subunit methyltransferase I (Vibrio vulnificus (strain CMCP6)).